Here is a 489-residue protein sequence, read N- to C-terminus: Betaine aldehyde dehydrogenase (489 aa).

Residues T26 and D93 each contribute to the K(+) site. 150–152 is a binding site for NAD(+); sequence GAW. K162 (charge relay system) is an active-site residue. 176 to 179 contributes to the NAD(+) binding site; that stretch reads KPSE. V180 lines the K(+) pocket. 229-232 is a binding site for NAD(+); the sequence is GVET. L245 provides a ligand contact to K(+). E251 functions as the Proton acceptor in the catalytic mechanism. 3 residues coordinate NAD(+): G253, C285, and E386. Catalysis depends on C285, which acts as the Nucleophile. Residue C285 is modified to Cysteine sulfenic acid (-SOH). Residues K456 and G459 each coordinate K(+). E463 (charge relay system) is an active-site residue.

Belongs to the aldehyde dehydrogenase family. In terms of assembly, dimer of dimers. The cofactor is K(+).

It carries out the reaction betaine aldehyde + NAD(+) + H2O = glycine betaine + NADH + 2 H(+). It participates in amine and polyamine biosynthesis; betaine biosynthesis via choline pathway; betaine from betaine aldehyde: step 1/1. In terms of biological role, involved in the biosynthesis of the osmoprotectant glycine betaine. Catalyzes the irreversible oxidation of betaine aldehyde to the corresponding acid. This chain is Betaine aldehyde dehydrogenase, found in Burkholderia vietnamiensis (strain G4 / LMG 22486) (Burkholderia cepacia (strain R1808)).